A 349-amino-acid chain; its full sequence is tRNA N6-adenosine threonylcarbamoyltransferase (349 aa).

Positions 116 and 120 each coordinate Fe cation. Residues 139 to 143 (LVSGG), Asp-172, Gly-185, and Asn-283 contribute to the substrate site. Fe cation is bound at residue Asp-311.

This sequence belongs to the KAE1 / TsaD family. It depends on Fe(2+) as a cofactor.

The protein resides in the cytoplasm. The catalysed reaction is L-threonylcarbamoyladenylate + adenosine(37) in tRNA = N(6)-L-threonylcarbamoyladenosine(37) in tRNA + AMP + H(+). Required for the formation of a threonylcarbamoyl group on adenosine at position 37 (t(6)A37) in tRNAs that read codons beginning with adenine. Is involved in the transfer of the threonylcarbamoyl moiety of threonylcarbamoyl-AMP (TC-AMP) to the N6 group of A37, together with TsaE and TsaB. TsaD likely plays a direct catalytic role in this reaction. This is tRNA N6-adenosine threonylcarbamoyltransferase from Colwellia psychrerythraea (strain 34H / ATCC BAA-681) (Vibrio psychroerythus).